The primary structure comprises 302 residues: Protein NEOXANTHIN-DEFICIENT 1 (302 aa).

Its function is as follows. Required for neoxanthin biosynthesis. Probably not involved directly in the enzymatic conversion of violaxanthin to neoxanthin. Is necessary but not sufficient for neoxanthin synthesis. This is Protein NEOXANTHIN-DEFICIENT 1 from Oryza sativa subsp. japonica (Rice).